A 145-amino-acid chain; its full sequence is MAILLPLKSILPWCCITFSFLLSSSGSISHSTASSSITLTKSSKPTNVPSNSRFDCSTINTFWLIVLSMTSKGKISGRLILRASVYACECTCIRYACCETIYPPRKPFSLSLYFFYFNKKASILFCYPDAKTKPEHPGNKRAGSG.

An N-terminal signal peptide occupies residues 1 to 26 (MAILLPLKSILPWCCITFSFLLSSSG).

This is an uncharacterized protein from Saccharomyces cerevisiae (strain ATCC 204508 / S288c) (Baker's yeast).